Consider the following 385-residue polypeptide: 3,5,7-trioxododecanoyl-CoA synthase (385 aa).

Cysteine 157 is a catalytic residue.

Belongs to the thiolase-like superfamily. Chalcone/stilbene synthases family. In terms of tissue distribution, expressed in bracts, flowers and young leaves. Not detected in mature leaves, roots and stems. Expressed in glandular trichomes.

It carries out the reaction hexanoyl-CoA + 3 malonyl-CoA + 3 H(+) = 3,5,7-trioxododecanoyl-CoA + 3 CO2 + 3 CoA. It catalyses the reaction 3,5,7-trioxododecanoyl-CoA = olivetol + CO2 + CoA. It functions in the pathway secondary metabolite biosynthesis; terpenoid biosynthesis. Involved in the biosynthesis of cannabinoids-related terpenophenolic natural products, which have pharmacological activity. Polyketide synthase responsible for olivetol biosynthesis, from a C(12)-polyketide, probably 3,5,7-trioxododecanoyl-CoA. Catalyzes the first step in the cannabinoids biosynthetic pathway. The preferred substrate is hexanoyl-CoA, but also accepts CoA esters with C4 to C8 aliphatic side chains. When using malonyl-CoA and hexanoyl-CoA as substrates, produces undetermined compounds distinct form olivetol or olivetolic acid that could be hexanoyl triacetic acid lactone (HTAL) and pentyl diacetic acid lactone (PDAL). Produces olivetolic acid when acting in concert with olivetolic acid cyclase (OAC). The sequence is that of 3,5,7-trioxododecanoyl-CoA synthase from Cannabis sativa (Hemp).